The sequence spans 49 residues: Sperm protamine P1 (49 aa).

This sequence belongs to the protamine P1 family. In terms of tissue distribution, testis.

It localises to the nucleus. Its subcellular location is the chromosome. Functionally, protamines substitute for histones in the chromatin of sperm during the haploid phase of spermatogenesis. They compact sperm DNA into a highly condensed, stable and inactive complex. The polypeptide is Sperm protamine P1 (PRM1) (Rhinopoma hardwickii (Lesser mouse-tailed bat)).